Here is a 206-residue protein sequence, read N- to C-terminus: High-affinity nitrate transporter-activating protein 2.1 (206 aa).

A signal peptide spans 1 to 27 (MARLAGVAALSLVLVLLGAGVPRPAAA). Residues 180 to 200 (VAAGVFSTFSIAALAFFFVVE) form a helical membrane-spanning segment.

Belongs to the NAR2 family. As to quaternary structure, heterotetramer composed of two NRT2.1, NRT2.2 or NRT2.3 and two NAR2.1. Interacts with NRT2.1, NRT2.2 and isoform 1 of NRT2.3. Expressed in epidermal cells of primary and lateral roots, root-shoot junction zone, vascular tissues of adventitious root primordia, stems and coleoptiles of germinating seeds.

The protein resides in the cell membrane. Acts as a dual component transporter with NTR2.1, NRT2.2 and NRT2.3. Required for high-affinity nitrate transport. Involved in the regulation of NRT2.1, NRT2.2 and NRT2.3 expression, and in both, HATS (high-affinity transport system) and LATS (low-affinity transport system) activities in plant roots. Imports nitrate with high affinity when expressed with NTR2.1, NTR2.2 or NTR2.3 in a heterologous system (Xenopus oocytes). The sequence is that of High-affinity nitrate transporter-activating protein 2.1 (NAR2.1) from Oryza sativa subsp. japonica (Rice).